The following is a 398-amino-acid chain: Cysteine desulfurase 2 (398 aa).

Residues 71–72, Asn-150, Gln-178, and 198–200 each bind pyridoxal 5'-phosphate; these read GT and SGH. Lys-201 carries the post-translational modification N6-(pyridoxal phosphate)lysine. Thr-236 contacts pyridoxal 5'-phosphate. The active-site Cysteine persulfide intermediate is Cys-323. [2Fe-2S] cluster is bound at residue Cys-323.

The protein belongs to the class-V pyridoxal-phosphate-dependent aminotransferase family. NifS/IscS subfamily. In terms of assembly, homodimer. Pyridoxal 5'-phosphate is required as a cofactor.

The catalysed reaction is (sulfur carrier)-H + L-cysteine = (sulfur carrier)-SH + L-alanine. In terms of biological role, catalyzes the removal of elemental sulfur atoms from cysteine to produce alanine. Seems to participate in the biosynthesis of the nitrogenase metalloclusters by providing the inorganic sulfur required for the Fe-S core formation. The polypeptide is Cysteine desulfurase 2 (Trichormus variabilis (strain ATCC 29413 / PCC 7937) (Anabaena variabilis)).